We begin with the raw amino-acid sequence, 126 residues long: Aspartate 1-decarboxylase (126 aa).

Ser25 acts as the Schiff-base intermediate with substrate; via pyruvic acid in catalysis. Residue Ser25 is modified to Pyruvic acid (Ser). Substrate is bound at residue Thr57. The Proton donor role is filled by Tyr58. Substrate is bound at residue 73–75 (GAA).

It belongs to the PanD family. In terms of assembly, heterooctamer of four alpha and four beta subunits. Requires pyruvate as cofactor. Post-translationally, is synthesized initially as an inactive proenzyme, which is activated by self-cleavage at a specific serine bond to produce a beta-subunit with a hydroxyl group at its C-terminus and an alpha-subunit with a pyruvoyl group at its N-terminus.

It is found in the cytoplasm. The catalysed reaction is L-aspartate + H(+) = beta-alanine + CO2. It functions in the pathway cofactor biosynthesis; (R)-pantothenate biosynthesis; beta-alanine from L-aspartate: step 1/1. Functionally, catalyzes the pyruvoyl-dependent decarboxylation of aspartate to produce beta-alanine. In Yersinia pestis bv. Antiqua (strain Antiqua), this protein is Aspartate 1-decarboxylase.